Consider the following 185-residue polypeptide: Peptidyl-tRNA hydrolase (185 aa).

A tRNA-binding site is contributed by Y14. H19 functions as the Proton acceptor in the catalytic mechanism. 3 residues coordinate tRNA: Y65, N67, and N113.

It belongs to the PTH family. In terms of assembly, monomer.

The protein localises to the cytoplasm. It carries out the reaction an N-acyl-L-alpha-aminoacyl-tRNA + H2O = an N-acyl-L-amino acid + a tRNA + H(+). Its function is as follows. Hydrolyzes ribosome-free peptidyl-tRNAs (with 1 or more amino acids incorporated), which drop off the ribosome during protein synthesis, or as a result of ribosome stalling. Catalyzes the release of premature peptidyl moieties from peptidyl-tRNA molecules trapped in stalled 50S ribosomal subunits, and thus maintains levels of free tRNAs and 50S ribosomes. This is Peptidyl-tRNA hydrolase from Rickettsia canadensis (strain McKiel).